An 80-amino-acid polypeptide reads, in one-letter code: Metallothionein-like protein type 2 (80 aa).

Belongs to the metallothionein superfamily. Type 15 family.

Its function is as follows. Metallothioneins have a high content of cysteine residues that bind various heavy metals. In Brassica campestris (Field mustard), this protein is Metallothionein-like protein type 2.